The sequence spans 550 residues: MEKKMFCYQCQETAGNKGCILKGVCGKDFSTANLMDLLVFNLKGIAIIMTSMRHAGVKADYRKADKAIMESLFATITNANFDYSSIAKRVEKTFALKAELYSLALTQGIELPENEAVTMQGKPEEYDRLALSVGILRETDEDVRSLKELTIYGLKGLAAYAEHADRLGYVDEEINAFTERALHDVTMGLLSAEELTALVLETGSFGVKVMALLDKANTETYGNPEITEVNIGVGSRPGILISGHDLKDMEMLLEQTEGTGIDVYTHGEMLPANYYPKFKKYNHFFGNYGNAWWKQREEFETFNGPILFTTNCIVPPKANASYKDRVFTTNATGYPGFKYIESDEHGRKDFSEIIALAKTCQPPTEIESGTIIGGFAHHQVLSIADKVVEAVSSGAIRKFVVMSGCDGRQSGRNYYTEFAEALPSDTVILTSGCAKFRYNKLQLGNIGGIPRVLDAGQCNDSYSLAVIALKLKEVMGLDDINKLPIVYNIAWYEQKAVIVLLALLSLGVKNIHVGPTLPAFLSPNVAKVLIENFGIAGIGTVEEDIRTLIA.

[4Fe-4S] cluster-binding residues include Cys7, Cys10, Cys19, and Cys25. Hybrid [4Fe-2O-2S] cluster contacts are provided by His244, Glu268, Cys312, Cys405, Cys433, Cys458, Glu493, and Lys495. The residue at position 405 (Cys405) is a Cysteine persulfide.

This sequence belongs to the HCP family. The cofactor is [4Fe-4S] cluster. Requires hybrid [4Fe-2O-2S] cluster as cofactor.

It is found in the cytoplasm. It catalyses the reaction A + NH4(+) + H2O = hydroxylamine + AH2 + H(+). Functionally, catalyzes the reduction of hydroxylamine to form NH(3) and H(2)O. The polypeptide is Hydroxylamine reductase (Porphyromonas gingivalis (strain ATCC 33277 / DSM 20709 / CIP 103683 / JCM 12257 / NCTC 11834 / 2561)).